A 337-amino-acid polypeptide reads, in one-letter code: Heme A synthase (337 aa).

5 helical membrane-spanning segments follow: residues 6–26 (ITKW…IGGI), 87–107 (FIHR…LIYF), 119–139 (LPYI…WYMV), 154–174 (LAFH…QLIK), and 192–212 (LIFS…GALV). H256 contacts heme. The next 3 membrane-spanning stretches (helical) occupy residues 258 to 278 (LGSY…LTIE), 285 to 305 (IAYF…ITLL), and 308 to 328 (VPII…SIII). H316 is a binding site for heme.

This sequence belongs to the COX15/CtaA family. Type 2 subfamily. In terms of assembly, interacts with CtaB. Requires heme b as cofactor.

Its subcellular location is the cell membrane. It carries out the reaction Fe(II)-heme o + 2 A + H2O = Fe(II)-heme a + 2 AH2. The protein operates within porphyrin-containing compound metabolism; heme A biosynthesis; heme A from heme O: step 1/1. Catalyzes the conversion of heme O to heme A by two successive hydroxylations of the methyl group at C8. The first hydroxylation forms heme I, the second hydroxylation results in an unstable dihydroxymethyl group, which spontaneously dehydrates, resulting in the formyl group of heme A. The sequence is that of Heme A synthase from Rickettsia akari (strain Hartford).